Here is a 494-residue protein sequence, read N- to C-terminus: UPF0371 protein SSA_0208 (494 aa).

It belongs to the UPF0371 family.

The chain is UPF0371 protein SSA_0208 from Streptococcus sanguinis (strain SK36).